Reading from the N-terminus, the 122-residue chain is Large ribosomal subunit protein uL18 (122 aa).

The protein belongs to the universal ribosomal protein uL18 family. In terms of assembly, part of the 50S ribosomal subunit; part of the 5S rRNA/L5/L18/L25 subcomplex. Contacts the 5S and 23S rRNAs.

This is one of the proteins that bind and probably mediate the attachment of the 5S RNA into the large ribosomal subunit, where it forms part of the central protuberance. This Thermosipho melanesiensis (strain DSM 12029 / CIP 104789 / BI429) protein is Large ribosomal subunit protein uL18.